Here is a 344-residue protein sequence, read N- to C-terminus: Probable dual-specificity RNA methyltransferase RlmN (344 aa).

The Proton acceptor role is filled by glutamate 90. Residues tyrosine 96–serine 326 enclose the Radical SAM core domain. Cysteine 103 and cysteine 331 are disulfide-bonded. [4Fe-4S] cluster-binding residues include cysteine 110, cysteine 114, and cysteine 117. S-adenosyl-L-methionine contacts are provided by residues glycine 157–glutamate 158, serine 189, serine 212–histidine 214, and asparagine 288. Cysteine 331 functions as the S-methylcysteine intermediate in the catalytic mechanism.

This sequence belongs to the radical SAM superfamily. RlmN family. It depends on [4Fe-4S] cluster as a cofactor.

Its subcellular location is the cytoplasm. It carries out the reaction adenosine(2503) in 23S rRNA + 2 reduced [2Fe-2S]-[ferredoxin] + 2 S-adenosyl-L-methionine = 2-methyladenosine(2503) in 23S rRNA + 5'-deoxyadenosine + L-methionine + 2 oxidized [2Fe-2S]-[ferredoxin] + S-adenosyl-L-homocysteine. The catalysed reaction is adenosine(37) in tRNA + 2 reduced [2Fe-2S]-[ferredoxin] + 2 S-adenosyl-L-methionine = 2-methyladenosine(37) in tRNA + 5'-deoxyadenosine + L-methionine + 2 oxidized [2Fe-2S]-[ferredoxin] + S-adenosyl-L-homocysteine. In terms of biological role, specifically methylates position 2 of adenine 2503 in 23S rRNA and position 2 of adenine 37 in tRNAs. In Caldicellulosiruptor saccharolyticus (strain ATCC 43494 / DSM 8903 / Tp8T 6331), this protein is Probable dual-specificity RNA methyltransferase RlmN.